A 33-amino-acid polypeptide reads, in one-letter code: Rhinophrynin-33 (33 aa).

Expressed by the skin glands.

Its subcellular location is the secreted. Non-cytotoxic peptide with immunosuppressive and insulinotropic effects. Induces an increased production of the anti-inflammatory cytokine IL-10 and inhibits production of the pro-inflammatory cytokines TNF-alpha and IL-1beta, when incubated with mouse peritoneal cells. Does not display growth-inhibitory activity against the Gram-positive S.epidermidis and Gram-negative E.coli bacteria and against the opportunistic yeast pathogen C.parapsilosis (MIC&gt;128 uM). In addition, it lacks cytotoxic activity against mouse erythrocytes (LC(50)&gt;500 uM) and A549 human non-small cell lung adenocarcinoma cells (LC(50)&gt;100 uM). Moderately stimulates insulin release from rat clonal beta-cells and mouse pancreatic islets. Functionally, non-cytotoxic peptide with immunosuppressive but without insulinotropic effects. Inhibits production of the pro-inflammatory cytokines TNF-alpha, but has no effect on IL-10 and IL-1beta production, when incubated with mouse peritoneal cells. Has no activity of stimulation of insulin release. In Rhinophrynus dorsalis (Mexican burrowing toad), this protein is Rhinophrynin-33.